A 233-amino-acid chain; its full sequence is TATA-box-binding protein 1 (233 aa).

2 consecutive repeat copies span residues 58–134 (LQNI…ARIV) and 148–225 (IQNI…YPVL).

The protein belongs to the TBP family. In terms of assembly, belongs to the TFIID complex together with the TBP-associated factors (TAFs). Binds DNA as monomer.

It localises to the nucleus. General transcription factor that functions at the core of the DNA-binding multiprotein factor TFIID. Binding of TFIID to the TATA box is the initial transcriptional step of the pre-initiation complex (PIC), playing a role in the activation of eukaryotic genes transcribed by RNA polymerase II. This Triticum aestivum (Wheat) protein is TATA-box-binding protein 1 (TBP1).